Consider the following 117-residue polypeptide: Large ribosomal subunit protein bL19 (117 aa).

The protein belongs to the bacterial ribosomal protein bL19 family.

This protein is located at the 30S-50S ribosomal subunit interface and may play a role in the structure and function of the aminoacyl-tRNA binding site. This chain is Large ribosomal subunit protein bL19, found in Vibrio vulnificus (strain CMCP6).